The primary structure comprises 169 residues: Large ribosomal subunit protein bL9 (169 aa).

It belongs to the bacterial ribosomal protein bL9 family.

In terms of biological role, binds to the 23S rRNA. This is Large ribosomal subunit protein bL9 from Chlamydia pneumoniae (Chlamydophila pneumoniae).